The following is an 86-amino-acid chain: Sec-independent protein translocase protein TatA (86 aa).

A helical membrane pass occupies residues 1-21; the sequence is MGISIWQLLIILAIVLVLFGA.

Belongs to the TatA/E family. In terms of assembly, the Tat system comprises two distinct complexes: a TatABC complex, containing multiple copies of TatA, TatB and TatC subunits, and a separate TatA complex, containing only TatA subunits. Substrates initially bind to the TatABC complex, which probably triggers association of the separate TatA complex to form the active translocon.

Its subcellular location is the cell inner membrane. Its function is as follows. Part of the twin-arginine translocation (Tat) system that transports large folded proteins containing a characteristic twin-arginine motif in their signal peptide across membranes. TatA could form the protein-conducting channel of the Tat system. This Hydrogenovibrio crunogenus (strain DSM 25203 / XCL-2) (Thiomicrospira crunogena) protein is Sec-independent protein translocase protein TatA.